A 116-amino-acid chain; its full sequence is Ribonuclease P protein component (116 aa).

It belongs to the RnpA family. As to quaternary structure, consists of a catalytic RNA component (M1 or rnpB) and a protein subunit.

The catalysed reaction is Endonucleolytic cleavage of RNA, removing 5'-extranucleotides from tRNA precursor.. Functionally, RNaseP catalyzes the removal of the 5'-leader sequence from pre-tRNA to produce the mature 5'-terminus. It can also cleave other RNA substrates such as 4.5S RNA. The protein component plays an auxiliary but essential role in vivo by binding to the 5'-leader sequence and broadening the substrate specificity of the ribozyme. The polypeptide is Ribonuclease P protein component (Lachnoclostridium phytofermentans (strain ATCC 700394 / DSM 18823 / ISDg) (Clostridium phytofermentans)).